We begin with the raw amino-acid sequence, 313 residues long: Dehydrodolichyl diphosphate synthase CPT5, chloroplastic (313 aa).

The N-terminal 42 residues, 1-42 (MAFSFQLQQVFPFPVKFCSQPKSIKLQIFPNLTKRLPIHPLA), are a transit peptide targeting the chloroplast. D89 is a catalytic residue.

The protein belongs to the UPP synthase family. Mg(2+) is required as a cofactor. Expressed in leaf trichomes, stem trichomes and old leaves. Expressed at low levels in young leaves and flowers.

It is found in the plastid. It localises to the chloroplast. The enzyme catalyses n isopentenyl diphosphate + (2E,6E)-farnesyl diphosphate = a di-trans,poly-cis-polyprenyl diphosphate + n diphosphate. Its function is as follows. Catalyzes cis-prenyl chain elongation to produce the polyprenyl backbone of dolichol, a glycosyl carrier-lipid required for the biosynthesis of several classes of glycoprotein. The protein is Dehydrodolichyl diphosphate synthase CPT5, chloroplastic of Solanum lycopersicum (Tomato).